The sequence spans 138 residues: ATP synthase epsilon chain (138 aa).

It belongs to the ATPase epsilon chain family. F-type ATPases have 2 components, CF(1) - the catalytic core - and CF(0) - the membrane proton channel. CF(1) has five subunits: alpha(3), beta(3), gamma(1), delta(1), epsilon(1). CF(0) has three main subunits: a, b and c.

It localises to the cell inner membrane. Produces ATP from ADP in the presence of a proton gradient across the membrane. This is ATP synthase epsilon chain from Verminephrobacter eiseniae (strain EF01-2).